The following is a 598-amino-acid chain: UvrABC system protein C (598 aa).

Residues 13–92 enclose the GIY-YIG domain; the sequence is SSPGVYLMKD…IKKYQPRYNV (80 aa). The 36-residue stretch at 206-241 folds into the UVR domain; sequence RSTISNLEKAIEKASQEQKFEHAAALYRTLTLIRQT.

This sequence belongs to the UvrC family. In terms of assembly, interacts with UvrB in an incision complex.

It is found in the cytoplasm. Its function is as follows. The UvrABC repair system catalyzes the recognition and processing of DNA lesions. UvrC both incises the 5' and 3' sides of the lesion. The N-terminal half is responsible for the 3' incision and the C-terminal half is responsible for the 5' incision. This chain is UvrABC system protein C, found in Chlamydia trachomatis serovar A (strain ATCC VR-571B / DSM 19440 / HAR-13).